Reading from the N-terminus, the 255-residue chain is AA9 family lytic polysaccharide monooxygenase D (255 aa).

Residues 1–19 (MYRTLGSIALLAGGAAAHG) form the signal peptide. Cu(2+)-binding residues include His18 and His92. 2 cysteine pairs are disulfide-bonded: Cys65-Cys189 and Cys104-Cys111. A glycan (N-linked (GlcNAc...) asparagine) is linked at Asn152. 2 residues coordinate O2: His178 and Gln184. Tyr186 is a Cu(2+) binding site. An N-linked (GlcNAc...) asparagine glycan is attached at Asn220.

This sequence belongs to the polysaccharide monooxygenase AA9 family. Cu(2+) is required as a cofactor.

It is found in the secreted. It catalyses the reaction [(1-&gt;4)-beta-D-glucosyl]n+m + reduced acceptor + O2 = 4-dehydro-beta-D-glucosyl-[(1-&gt;4)-beta-D-glucosyl]n-1 + [(1-&gt;4)-beta-D-glucosyl]m + acceptor + H2O.. Lytic polysaccharide monooxygenase (LPMO) that depolymerizes crystalline and amorphous polysaccharides via the oxidation of scissile alpha- or beta-(1-4)-glycosidic bonds, yielding specifically C1 oxidation product. Catalysis by LPMOs requires the reduction of the active-site copper from Cu(II) to Cu(I) by a reducing agent and H(2)O(2) or O(2) as a cosubstrate. Is active on regenerated amorphous cellulose (RAC) in the presence of ascorbic acid or 3-methylcatechol. Also acts on phosphoric acid swollen cellulose (PASC) as a substrate. The protein is AA9 family lytic polysaccharide monooxygenase D of Thermothelomyces thermophilus (strain ATCC 42464 / BCRC 31852 / DSM 1799) (Sporotrichum thermophile).